A 795-amino-acid chain; its full sequence is Phenylalanine--tRNA ligase beta subunit (795 aa).

A tRNA-binding domain is found at 39 to 148 (AGDFSGVVVG…QNAPVGTNLR (110 aa)). Residues 401–476 (PKLNQVSLRR…RIYGYNSIPN (76 aa)) enclose the B5 domain. 4 residues coordinate Mg(2+): Asp-454, Asp-460, Glu-463, and Glu-464. Residues 701-794 (SRFPANRRDL…LKQRFNAYLR (94 aa)) form the FDX-ACB domain.

It belongs to the phenylalanyl-tRNA synthetase beta subunit family. Type 1 subfamily. In terms of assembly, tetramer of two alpha and two beta subunits. Mg(2+) is required as a cofactor.

Its subcellular location is the cytoplasm. The enzyme catalyses tRNA(Phe) + L-phenylalanine + ATP = L-phenylalanyl-tRNA(Phe) + AMP + diphosphate + H(+). The protein is Phenylalanine--tRNA ligase beta subunit (pheT) of Pasteurella multocida (strain Pm70).